Reading from the N-terminus, the 492-residue chain is 5-taurinomethyluridine-[tRNA] synthase subunit GTPB3, mitochondrial (492 aa).

Residues 1–20 constitute a mitochondrion transit peptide; that stretch reads MWRGLSALVTRPASAPLRLC. The 5,10-methylenetetrahydrofolate site is built by R52, E112, and K152. Residues 249–416 enclose the TrmE-type G domain; sequence GANVVVAGPP…LLQALKTELA (168 aa). Residues 256–263, 282–286, 303–306, and 374–377 contribute to the GTP site; these read GPPNAGKS, GTTRD, DTAG, and NKSD. Position 259 (N259) interacts with K(+). S263 and T284 together coordinate Mg(2+). A 5,10-methylenetetrahydrofolate-binding site is contributed by K492.

Belongs to the TRAFAC class TrmE-Era-EngA-EngB-Septin-like GTPase superfamily. TrmE GTPase family. In terms of assembly, homodimer; forms a dimer in the presence of potassium. Interacts with MTO1; forms the GTPBP3-MTO1 complex composed of homodimers of GTPBP3 and MTO1. K(+) serves as cofactor.

It is found in the mitochondrion. The enzyme catalyses GTP + H2O = GDP + phosphate + H(+). GTPase component of the GTPBP3-MTO1 complex that catalyzes the 5-taurinomethyluridine (taum(5)U) modification at the 34th wobble position (U34) of mitochondrial tRNAs (mt-tRNAs), which plays a role in mt-tRNA decoding and mitochondrial translation. Taum(5)U formation on mammalian mt-tRNA requires the presence of both GTPBP3-mediated GTPase activity and MTO1 catalytic activity. This chain is 5-taurinomethyluridine-[tRNA] synthase subunit GTPB3, mitochondrial, found in Rattus norvegicus (Rat).